We begin with the raw amino-acid sequence, 158 residues long: Cyclic pyranopterin monophosphate synthase (158 aa).

Residues 74–76 and 112–113 each bind substrate; these read MCH and ME. Asp-127 is a catalytic residue.

The protein belongs to the MoaC family. As to quaternary structure, homohexamer; trimer of dimers.

The catalysed reaction is (8S)-3',8-cyclo-7,8-dihydroguanosine 5'-triphosphate = cyclic pyranopterin phosphate + diphosphate. Its pathway is cofactor biosynthesis; molybdopterin biosynthesis. Its function is as follows. Catalyzes the conversion of (8S)-3',8-cyclo-7,8-dihydroguanosine 5'-triphosphate to cyclic pyranopterin monophosphate (cPMP). In Helicobacter pylori (strain HPAG1), this protein is Cyclic pyranopterin monophosphate synthase.